The primary structure comprises 448 residues: Putative RNA-ligase (448 aa).

Belongs to the asfivirus M448R family.

Its subcellular location is the virion. The sequence is that of Putative RNA-ligase from Ornithodoros (relapsing fever ticks).